The following is a 776-amino-acid chain: MKLVIVESPAKAKTINKYLGDEFKVIASFGHIRDLPSKKGSVLPDENFAMKYDISDKAGKYVDAIVKDAKKADAVYLATDPDREGESISWHVAEVIKEKNQVKSDDFFKRVAFNEITKKAIIHAVENPRKLDTNLVNAQQARRALDYLVGFTLSPLLWRKLPGCKSAGRVQSVALRLICEREDEIERFKSEEYWDISLKMQNSNNELFTAKLTHVNDQKLEKFSIINEKNAKDLTKKLKSHKFHVDKIEKKQQKRQPQPPFITSSLQQEAARKLGFSAKKTMQIAQKLYEGVDIGKETIGLITYMRTDGVTLSNDAIADIRKLIDKSYGDKYLPTSPRIYKSKVKNAQEAHEAIRPTNITYTPDSLKEKLDKDYYKLYELIWKRTIACQMENVIMDLVVANLASENKEYLAKANGSTIAFDGFYKVYRESMDDEAEEENKMLPPLKEQEPLKTKAVIPNQHFTEPPPRYSEASLVKKLEELGIGRPSTYASILSVLQDRKYVALEKKRFIPEELGRLVTVFLVGFFKKYVEYDFTAGLENELDAIAAGKLEWKAALNNFWSGFNHNIESVNEQKITEIISYVQKALDYHLFGENKESKICPSCNTGELSLKLGKFGAFLACSNYPECTFRKSIVSGNDNNENEGEPAAMPNENKVLGTDKDGVEIYLKKGPYGPYIQLGKQEGKVKPKRSPVPASLNQNDITLDIALKLLSLPLKIGIHKDSDEEIMIGYGKFGPYIKYMGQFISVQKKYDFLNLSLDDAMKLIEENKAKLEKKQA.

The region spanning 1-111 (MKLVIVESPA…VKSDDFFKRV (111 aa)) is the Toprim domain. Mg(2+) is bound by residues E7 and D80. Residues 132 to 568 (DTNLVNAQQA…FWSGFNHNIE (437 aa)) form the Topo IA-type catalytic domain. Residues 166 to 171 (SAGRVQ) are interaction with DNA. Y304 functions as the O-(5'-phospho-DNA)-tyrosine intermediate in the catalytic mechanism. The segment at 600–627 (CPSCNTGELSLKLGKFGAFLACSNYPEC) adopts a C4-type zinc-finger fold.

Belongs to the type IA topoisomerase family. In terms of assembly, monomer. Mg(2+) is required as a cofactor.

It carries out the reaction ATP-independent breakage of single-stranded DNA, followed by passage and rejoining.. Releases the supercoiling and torsional tension of DNA, which is introduced during the DNA replication and transcription, by transiently cleaving and rejoining one strand of the DNA duplex. Introduces a single-strand break via transesterification at a target site in duplex DNA. The scissile phosphodiester is attacked by the catalytic tyrosine of the enzyme, resulting in the formation of a DNA-(5'-phosphotyrosyl)-enzyme intermediate and the expulsion of a 3'-OH DNA strand. The free DNA strand then undergoes passage around the unbroken strand, thus removing DNA supercoils. Finally, in the religation step, the DNA 3'-OH attacks the covalent intermediate to expel the active-site tyrosine and restore the DNA phosphodiester backbone. The chain is DNA topoisomerase 1 from Rickettsia conorii (strain ATCC VR-613 / Malish 7).